The sequence spans 185 residues: Prenylated Rab acceptor protein 1 (185 aa).

The Cytoplasmic portion of the chain corresponds to 1 to 78 (MAAQKDQQKD…RNVEYYQSNY (78 aa)). Positions 30–54 (AGREWLERRRATIRPWSTFVDQQRF) are required for interaction with prenylated RAB3A and VAMP2. The next 2 membrane-spanning stretches (helical) occupy residues 79–94 (VFVF…VTSP) and 95–112 (MLLV…ILYL). At 113–131 (RTLESKLVLFGREVSPAHQ) the chain is on the cytoplasmic side. A run of 2 helical transmembrane segments spans residues 132-148 (YALA…LAGA) and 149-165 (GSAV…VIGS). A required for interaction with GDI1 region spans residues 165–185 (SHAAFHQIEAVDGEELQMEPV). Topologically, residues 166-185 (HAAFHQIEAVDGEELQMEPV) are cytoplasmic. Residues 175–185 (VDGEELQMEPV) are required for interaction with prenylated RAB3A and VAMP2. Residues 175 to 185 (VDGEELQMEPV) form a homodimerization region.

This sequence belongs to the PRA1 family. Homodimer. Interacts with VAMP2 (synaptobrevin-2), GDI1, and PCLO. Interacts specifically with prenylated Rab proteins; strongly with RAB4B, RAB5A and RAB5C, and weakly with RAB4A, RAB6, RAB7A, RAB17 and RAB22. Interacts with NDRG1. As to expression, ubiquitous. Strongest expression found in placenta, pituitary gland, kidney, lung and stomach.

The protein localises to the cell membrane. The protein resides in the cytoplasm. Its subcellular location is the golgi apparatus. It is found in the cytoplasmic vesicle. It localises to the secretory vesicle. The protein localises to the synaptic vesicle. Functionally, general Rab protein regulator required for vesicle formation from the Golgi complex. May control vesicle docking and fusion by mediating the action of Rab GTPases to the SNARE complexes. In addition it inhibits the removal of Rab GTPases from the membrane by GDI. This Homo sapiens (Human) protein is Prenylated Rab acceptor protein 1 (RABAC1).